Reading from the N-terminus, the 157-residue chain is Peptide methionine sulfoxide reductase MsrA (157 aa).

Residue Cys10 is part of the active site.

Belongs to the MsrA Met sulfoxide reductase family.

The catalysed reaction is L-methionyl-[protein] + [thioredoxin]-disulfide + H2O = L-methionyl-(S)-S-oxide-[protein] + [thioredoxin]-dithiol. It carries out the reaction [thioredoxin]-disulfide + L-methionine + H2O = L-methionine (S)-S-oxide + [thioredoxin]-dithiol. Its function is as follows. Has an important function as a repair enzyme for proteins that have been inactivated by oxidation. Catalyzes the reversible oxidation-reduction of methionine sulfoxide in proteins to methionine. This is Peptide methionine sulfoxide reductase MsrA from Clostridium botulinum (strain Kyoto / Type A2).